The primary structure comprises 366 residues: uncharacterized protein (366 aa).

Helical transmembrane passes span 164-184, 188-208, 223-243, 256-276, 299-319, and 325-345; these read IPLILTFIGFSLILYAIFADI, IVVGIIGLYILSEGVGVRKLL, VFPISASISIFILIIGLIYSL, FIGEFLLHFVDSLTLSLLILM, FFCLICIFISRELIISGGEYL, and FIMFVMCVIIYISIVIILSVI.

The protein to A.fulgidus AF2058.

Its subcellular location is the cell membrane. This is an uncharacterized protein from Methanocaldococcus jannaschii (strain ATCC 43067 / DSM 2661 / JAL-1 / JCM 10045 / NBRC 100440) (Methanococcus jannaschii).